We begin with the raw amino-acid sequence, 110 residues long: Ribonuclease P protein component 1 (110 aa).

It belongs to the eukaryotic/archaeal RNase P protein component 1 family. As to quaternary structure, consists of a catalytic RNA component and at least 4-5 protein subunits.

Its subcellular location is the cytoplasm. It carries out the reaction Endonucleolytic cleavage of RNA, removing 5'-extranucleotides from tRNA precursor.. Part of ribonuclease P, a protein complex that generates mature tRNA molecules by cleaving their 5'-ends. The chain is Ribonuclease P protein component 1 from Aeropyrum pernix (strain ATCC 700893 / DSM 11879 / JCM 9820 / NBRC 100138 / K1).